Reading from the N-terminus, the 367-residue chain is CCN family member 4 (367 aa).

A signal peptide spans 1-22; it reads MRWFLPWTLAAVTAAAASTVLA. In terms of domain architecture, IGFBP N-terminal spans 45 to 118; the sequence is RPQFCKWPCE…RYAIGVCAQV (74 aa). 4 disulfide bridges follow: Cys-49–Cys-73, Cys-53–Cys-75, Cys-55–Cys-76, and Cys-62–Cys-79. Asn-86 carries N-linked (GlcNAc...) asparagine glycosylation. Intrachain disulfides connect Cys-87–Cys-101 and Cys-93–Cys-115. A VWFC domain is found at 121–186; it reads VGCVLDGVRY…GHCCEQWVCE (66 aa). An N-linked (GlcNAc...) asparagine glycan is attached at Asn-143. Positions 215 to 260 constitute a TSP type-1 domain; it reads NCIAYTSPWSPCSTSCGLGVSTRISNVNAQCWPEQESRLCNLRPCD. 5 cysteine pairs are disulfide-bonded: Cys-273–Cys-310, Cys-290–Cys-324, Cys-301–Cys-340, Cys-304–Cys-342, and Cys-309–Cys-346. The CTCK domain occupies 273 to 347; it reads CLAVYQPEAS…NACFCNLSCR (75 aa). Asn-284 carries N-linked (GlcNAc...) asparagine glycosylation. An N-linked (GlcNAc...) asparagine glycan is attached at Asn-343.

This sequence belongs to the CCN family. In terms of tissue distribution, expressed in heart, kidney, lung, pancreas, placenta, ovary, small intestine and spleen. Isoform 2 is expressed predominantly in scirrhous gastric carcinoma and, weakly in placenta. Overexpression is associated with several cancers including breast cancer and colon tumors. Isoform 2 is overexpressed in scirrhous gastric carcinoma.

It is found in the secreted. Functionally, downstream regulator in the Wnt/Frizzled-signaling pathway. Associated with cell survival. Attenuates p53-mediated apoptosis in response to DNA damage through activation of AKT kinase. Up-regulates the anti-apoptotic Bcl-X(L) protein. Adheres to skin and melanoma fibroblasts. In vitro binding to skin fibroblasts occurs through the proteoglycans, decorin and biglycan. The chain is CCN family member 4 from Homo sapiens (Human).